Consider the following 174-residue polypeptide: Small ribosomal subunit protein uS4 (174 aa).

The region spanning 105-169 (RRLQTVAYRK…SPLADDLHPE (65 aa)) is the S4 RNA-binding domain.

Belongs to the universal ribosomal protein uS4 family. In terms of assembly, part of the 30S ribosomal subunit. Contacts protein S5. The interaction surface between S4 and S5 is involved in control of translational fidelity.

In terms of biological role, one of the primary rRNA binding proteins, it binds directly to 16S rRNA where it nucleates assembly of the body of the 30S subunit. Functionally, with S5 and S12 plays an important role in translational accuracy. The sequence is that of Small ribosomal subunit protein uS4 from Natronomonas pharaonis (strain ATCC 35678 / DSM 2160 / CIP 103997 / JCM 8858 / NBRC 14720 / NCIMB 2260 / Gabara) (Halobacterium pharaonis).